The following is an 87-amino-acid chain: MFVVELSLKLSPMPISVQRKSLEAAQGLYGEIRQAMESGHPQLMDLRCEKSEEKQICLRSSEIVSVQLYEKSAMGAGSKRPGFSTGG.

This sequence belongs to the UPF0367 family.

This Synechococcus sp. (strain RCC307) protein is UPF0367 protein SynRCC307_0258.